A 288-amino-acid chain; its full sequence is ATP synthase subunit a (288 aa).

The next 6 membrane-spanning stretches (helical) occupy residues 47-67 (LDSM…FWMV), 104-124 (LIAP…LMDL), 157-177 (DPNI…FYSI), 199-219 (PIVQ…TLIA), 237-257 (LIFI…SVPW), and 258-278 (AIFH…LTIV).

It belongs to the ATPase A chain family. F-type ATPases have 2 components, CF(1) - the catalytic core - and CF(0) - the membrane proton channel. CF(1) has five subunits: alpha(3), beta(3), gamma(1), delta(1), epsilon(1). CF(0) has three main subunits: a(1), b(2) and c(9-12). The alpha and beta chains form an alternating ring which encloses part of the gamma chain. CF(1) is attached to CF(0) by a central stalk formed by the gamma and epsilon chains, while a peripheral stalk is formed by the delta and b chains.

The protein resides in the cell inner membrane. Its function is as follows. Key component of the proton channel; it plays a direct role in the translocation of protons across the membrane. The protein is ATP synthase subunit a of Psychrobacter arcticus (strain DSM 17307 / VKM B-2377 / 273-4).